Here is a 598-residue protein sequence, read N- to C-terminus: NADH-ubiquinone oxidoreductase chain 5 (598 aa).

Transmembrane regions (helical) follow at residues 6–26 (LTLIMNSGALLTIIVLLPPII), 32–52 (MILTTKLVKISMFISLIPLTI), 84–100 (YTVIFTPIALMITWSIM), 113–133 (MDKFFKYLLLFLITMITFISA), 136–156 (LLQLFIGWEGVGIMSFLLISW), 241–261 (TPVSALLHSSTMVVAGVFLLI), 272–292 (LMLEMTLCLGAMTTICAALCA), 301–320 (IIAFSTSSQLGLMMVAVGLN), 325–347 (AFLHMCTHAFFKAMLFLCSGSII), 370–390 (TTCMTIGSAALMGLPFLAGFF), 409–429 (LMVTLMAVTLTTAYSSRLIIM), 456–476 (LAWGSLISGLILTSTLPPMKP), 478–498 (IFTMPTYIKTIALMMFIISLI), and 576–596 (LNSATLPLMAFALTLITLSLT).

This sequence belongs to the complex I subunit 5 family.

It is found in the mitochondrion inner membrane. The catalysed reaction is a ubiquinone + NADH + 5 H(+)(in) = a ubiquinol + NAD(+) + 4 H(+)(out). Functionally, core subunit of the mitochondrial membrane respiratory chain NADH dehydrogenase (Complex I) that is believed to belong to the minimal assembly required for catalysis. Complex I functions in the transfer of electrons from NADH to the respiratory chain. The immediate electron acceptor for the enzyme is believed to be ubiquinone. This is NADH-ubiquinone oxidoreductase chain 5 (MT-ND5) from Petromyzon marinus (Sea lamprey).